Consider the following 210-residue polypeptide: Putative truncated L-serine dehydratase SDL1 (210 aa).

The protein belongs to the serine/threonine dehydratase family. The cofactor is pyridoxal 5'-phosphate.

The protein localises to the cytoplasm. It catalyses the reaction L-serine = pyruvate + NH4(+). Its pathway is carbohydrate biosynthesis; gluconeogenesis. This Saccharomyces cerevisiae (strain ATCC 204508 / S288c) (Baker's yeast) protein is Putative truncated L-serine dehydratase SDL1 (SDL1).